The chain runs to 230 residues: Cytochrome c oxidase subunit 2 (230 aa).

Topologically, residues 1 to 14 are mitochondrial intermembrane; that stretch reads MAHPTQLGFKDAAM. Residues 15–45 traverse the membrane as a helical segment; the sequence is PVMEELLHFHDHALMIVLLISTLVLYIITAM. Over 46-59 the chain is Mitochondrial matrix; the sequence is VSTKLTNKYILDSQ. The chain crosses the membrane as a helical span at residues 60–87; the sequence is EIEIVWTILPAVILVLIALPSLRILYLM. Residues 88–230 lie on the Mitochondrial intermembrane side of the membrane; the sequence is DEINDPHLTI…NWSSLMLEDA (143 aa). Residues histidine 161, cysteine 196, glutamate 198, cysteine 200, histidine 204, and methionine 207 each contribute to the Cu cation site. Glutamate 198 contributes to the Mg(2+) binding site.

The protein belongs to the cytochrome c oxidase subunit 2 family. Component of the cytochrome c oxidase (complex IV, CIV), a multisubunit enzyme composed of 14 subunits. The complex is composed of a catalytic core of 3 subunits MT-CO1, MT-CO2 and MT-CO3, encoded in the mitochondrial DNA, and 11 supernumerary subunits COX4I, COX5A, COX5B, COX6A, COX6B, COX6C, COX7A, COX7B, COX7C, COX8 and NDUFA4, which are encoded in the nuclear genome. The complex exists as a monomer or a dimer and forms supercomplexes (SCs) in the inner mitochondrial membrane with NADH-ubiquinone oxidoreductase (complex I, CI) and ubiquinol-cytochrome c oxidoreductase (cytochrome b-c1 complex, complex III, CIII), resulting in different assemblies (supercomplex SCI(1)III(2)IV(1) and megacomplex MCI(2)III(2)IV(2)). Found in a complex with TMEM177, COA6, COX18, COX20, SCO1 and SCO2. Interacts with TMEM177 in a COX20-dependent manner. Interacts with COX20. Interacts with COX16. It depends on Cu cation as a cofactor.

The protein localises to the mitochondrion inner membrane. It catalyses the reaction 4 Fe(II)-[cytochrome c] + O2 + 8 H(+)(in) = 4 Fe(III)-[cytochrome c] + 2 H2O + 4 H(+)(out). Component of the cytochrome c oxidase, the last enzyme in the mitochondrial electron transport chain which drives oxidative phosphorylation. The respiratory chain contains 3 multisubunit complexes succinate dehydrogenase (complex II, CII), ubiquinol-cytochrome c oxidoreductase (cytochrome b-c1 complex, complex III, CIII) and cytochrome c oxidase (complex IV, CIV), that cooperate to transfer electrons derived from NADH and succinate to molecular oxygen, creating an electrochemical gradient over the inner membrane that drives transmembrane transport and the ATP synthase. Cytochrome c oxidase is the component of the respiratory chain that catalyzes the reduction of oxygen to water. Electrons originating from reduced cytochrome c in the intermembrane space (IMS) are transferred via the dinuclear copper A center (CU(A)) of subunit 2 and heme A of subunit 1 to the active site in subunit 1, a binuclear center (BNC) formed by heme A3 and copper B (CU(B)). The BNC reduces molecular oxygen to 2 water molecules using 4 electrons from cytochrome c in the IMS and 4 protons from the mitochondrial matrix. The protein is Cytochrome c oxidase subunit 2 (mt-co2) of Cyprinus carpio (Common carp).